The sequence spans 212 residues: Large ribosomal subunit protein uL4 (212 aa).

This sequence belongs to the universal ribosomal protein uL4 family. In terms of assembly, part of the 50S ribosomal subunit.

In terms of biological role, one of the primary rRNA binding proteins, this protein initially binds near the 5'-end of the 23S rRNA. It is important during the early stages of 50S assembly. It makes multiple contacts with different domains of the 23S rRNA in the assembled 50S subunit and ribosome. Forms part of the polypeptide exit tunnel. In Phenylobacterium zucineum (strain HLK1), this protein is Large ribosomal subunit protein uL4.